Here is a 243-residue protein sequence, read N- to C-terminus: UPF0246 protein MGAS9429_Spy1799 (243 aa).

This sequence belongs to the UPF0246 family.

The sequence is that of UPF0246 protein MGAS9429_Spy1799 from Streptococcus pyogenes serotype M12 (strain MGAS9429).